We begin with the raw amino-acid sequence, 243 residues long: Transmembrane protein 174 (243 aa).

Transmembrane regions (helical) follow at residues 40-60 (LLFSGIFLGLVGITFTVMGWI) and 73-93 (LLGPILLSVGVTFILIAVCKF).

As to quaternary structure, interacts with SLC34A1; regulates SLC34A1 internalization by PTH and FGF23. As to expression, kidney specific. Expressed in renal primary proximal tubule cells.

It localises to the endoplasmic reticulum membrane. The protein resides in the apical cell membrane. Functionally, regulator of plasma phosphate homeostasis. Decreases serum inorganic phosphate (Pi) uptake by regulating the sodium-phosphate cotransporter SLC34A1 trafficking by PTH and FGF23 in the kidney. The chain is Transmembrane protein 174 (Tmem174) from Mus musculus (Mouse).